We begin with the raw amino-acid sequence, 523 residues long: Cyclic di-GMP binding protein BcsE (523 aa).

This sequence belongs to the BcsE family.

In terms of biological role, required for cellulose biosynthesis. May have protease activity, but BcsA is not targeted. Binds bis-(3'-5') cyclic diguanylic acid (c-di-GMP). The protein is Cyclic di-GMP binding protein BcsE of Salmonella typhimurium (strain LT2 / SGSC1412 / ATCC 700720).